The following is a 105-amino-acid chain: Cell division protein FtsL (105 aa).

The Cytoplasmic portion of the chain corresponds to 1–24 (MAEKMEKTGQILQMQLKRFSRVEK). A helical transmembrane segment spans residues 25–45 (AFYFSIAVTTLIVAISIIFMQ). Residues 46 to 105 (TKLLQVQNDLTKINAQIEEKKTELDDAKQEVNELLRAERLKEIANSHDLQLNNENIRIAE) are Extracellular-facing.

It belongs to the FtsL family.

It is found in the cell membrane. Functionally, essential cell division protein. The sequence is that of Cell division protein FtsL from Streptococcus pneumoniae (strain ATCC BAA-255 / R6).